Here is a 518-residue protein sequence, read N- to C-terminus: MDESSIIPAEKVAGAEKKELQGLLKTAVQSVDWTYSVFWQFCPQQRVLVWGNGYYNGAIKTRKTTQPAEVTAEEAALERSQQLRELYETLLAGESTSEARACTALSPEDLTETEWFYLMCVSFSFPPPSGMPGKAYARRKHVWLSGANEVDSKTFSRAILAKSAKIQTVVCIPMLDGVVELGTTKKVREDVEFVELTKSFFYDHCKTNPKPALSEHSTYEVHEEAEDEEEVEEEMTMSEEMRLGSPDDEDVSNQNLHSDLHIESTHTLDTHMDMMNLMEEGGNYSQTVTTLLMSHPTSLLSDSVSTSSYIQSSFATWRVENGKEHQQVKTAPSSQWVLKQMIFRVPFLHDNTKDKRLPREDLSHVVAERRRREKLNEKFITLRSMVPFVTKMDKVSILGDTIAYVNHLRKRVHELENTHHEQQHKRTRTCKRKTSEEVEVSIIENDVLLEMRCEYRDGLLLDILQVLHELGIETTAVHTSVNDHDFEAEIRAKVRGKKASIAEVKRAIHQVIIHDTNL.

Coiled-coil stretches lie at residues 220–240 (EVHEEAEDEEEVEEEMTMSEE) and 405–428 (VNHLRKRVHELENTHHEQQHKRTR). One can recognise a bHLH domain in the interval 359 to 408 (REDLSHVVAERRRREKLNEKFITLRSMVPFVTKMDKVSILGDTIAYVNHL).

The protein belongs to the bHLH protein family. In terms of assembly, homodimer. Interacts with MYB4, MYB5, MYB6, MYB82, MYB113, MYB114, MYB75/PAP1, MYB90/PAP2, and TT2. In terms of tissue distribution, buds, flowers and developing siliques, but not in leaves, stems and roots.

The protein resides in the nucleus. Its function is as follows. Transcription activator, when associated with MYB75/PAP1 or MYB90/PAP2. Involved in the control of flavonoid pigmentation. Plays a key role in regulating leucoanthocyanidin reductase (BANYULS) and dihydroflavonol-4-reductase (DFR). Not required for leucoanthocyanidin dioxygenase (LDOX) expression. The protein is Transcription factor TT8 of Arabidopsis thaliana (Mouse-ear cress).